Here is a 326-residue protein sequence, read N- to C-terminus: Homocysteine S-methyltransferase 1 (326 aa).

Positions 9-323 (LLEDLIKKCG…STINAISRDL (315 aa)) constitute a Hcy-binding domain. Positions 241, 308, and 309 each coordinate Zn(2+).

Monomer. It depends on Zn(2+) as a cofactor. Expressed predominantly in roots. Expressed in rosette leaves, cauline leaves and developing seeds.

It catalyses the reaction S-methyl-L-methionine + L-homocysteine = 2 L-methionine + H(+). Strongly inhibited by methionine. Catalyzes methyl transfer from S-methylmethionine (SMM) to adenosyl-L-homocysteine (AdoMet). SMM degradation (by HMT-1, HMT-2 and HMT-3) and biosynthesis (by MMT1) constitute the SMM cycle in plants, which is probably required to achieve short term control of AdoMet level. This chain is Homocysteine S-methyltransferase 1 (HMT-1), found in Arabidopsis thaliana (Mouse-ear cress).